The chain runs to 184 residues: MAGKGSYVPPQYIPLYSLDTEEDRVPAVEENHATRPKLNQDPTQWSSGICACFDDPQSCCIGAICPCFLFGKNAQFLGSGTLAGSCTTHCMLWGLLTSLCCVFTGGLVLAVPGSAVACYACGYRSALRTKYNLPEAPCGDLTTHLFCHLCAICQEYREIRERTGSGSSPAPNVTPPPVQTMDEL.

A helical membrane pass occupies residues 91-111 (MLWGLLTSLCCVFTGGLVLAV). Positions 162-184 (RTGSGSSPAPNVTPPPVQTMDEL) are disordered.

The protein belongs to the cornifelin family. In terms of tissue distribution, expressed in roots, leaves, stalks, immature ears, endosperm and pollen.

It is found in the membrane. The chain is Cell number regulator 5 (CNR5) from Zea mays (Maize).